The primary structure comprises 124 residues: Small ribosomal subunit protein uS13 (124 aa).

The segment at 95 to 124 (GLPVRGQRTKTNARTRKGPKRTIAGKKKAR) is disordered.

This sequence belongs to the universal ribosomal protein uS13 family. Part of the 30S ribosomal subunit. Forms a loose heterodimer with protein S19. Forms two bridges to the 50S subunit in the 70S ribosome.

Located at the top of the head of the 30S subunit, it contacts several helices of the 16S rRNA. In the 70S ribosome it contacts the 23S rRNA (bridge B1a) and protein L5 of the 50S subunit (bridge B1b), connecting the 2 subunits; these bridges are implicated in subunit movement. Contacts the tRNAs in the A and P-sites. This is Small ribosomal subunit protein uS13 from Mycolicibacterium smegmatis (strain ATCC 700084 / mc(2)155) (Mycobacterium smegmatis).